The primary structure comprises 636 residues: Threonine--tRNA ligase (636 aa).

A TGS domain is found at 1 to 61 (MPVITLPDGS…TQDVSLSIIT (61 aa)). A catalytic region spans residues 242-533 (DHRKLGKKFD…LIEEYEGAFP (292 aa)). 3 residues coordinate Zn(2+): Cys333, His384, and His510.

It belongs to the class-II aminoacyl-tRNA synthetase family. In terms of assembly, homodimer. The cofactor is Zn(2+).

The protein localises to the cytoplasm. It catalyses the reaction tRNA(Thr) + L-threonine + ATP = L-threonyl-tRNA(Thr) + AMP + diphosphate + H(+). In terms of biological role, catalyzes the attachment of threonine to tRNA(Thr) in a two-step reaction: L-threonine is first activated by ATP to form Thr-AMP and then transferred to the acceptor end of tRNA(Thr). Also edits incorrectly charged L-seryl-tRNA(Thr). The chain is Threonine--tRNA ligase from Saccharophagus degradans (strain 2-40 / ATCC 43961 / DSM 17024).